A 158-amino-acid chain; its full sequence is MKIIGIDPGTAIVGVGVLEKKNGKLIVKNFQAITTPPIAKEKRLKIIFQKLNEILIQEKPEIVVVEELFFSKNVKTAISVGEARGVVLLASALNDIPVLELKPVEVKTIVTGYGHAPKSQVEYMIAKLLGLKTPPKPDDVADALAIAYAGFLKMGGLL.

Residues Asp-7, Glu-66, and Asp-139 contribute to the active site. Residues Asp-7, Glu-66, and Asp-139 each contribute to the Mg(2+) site.

Belongs to the RuvC family. As to quaternary structure, homodimer which binds Holliday junction (HJ) DNA. The HJ becomes 2-fold symmetrical on binding to RuvC with unstacked arms; it has a different conformation from HJ DNA in complex with RuvA. In the full resolvosome a probable DNA-RuvA(4)-RuvB(12)-RuvC(2) complex forms which resolves the HJ. Mg(2+) serves as cofactor.

It localises to the cytoplasm. The catalysed reaction is Endonucleolytic cleavage at a junction such as a reciprocal single-stranded crossover between two homologous DNA duplexes (Holliday junction).. Its function is as follows. The RuvA-RuvB-RuvC complex processes Holliday junction (HJ) DNA during genetic recombination and DNA repair. Endonuclease that resolves HJ intermediates. Cleaves cruciform DNA by making single-stranded nicks across the HJ at symmetrical positions within the homologous arms, yielding a 5'-phosphate and a 3'-hydroxyl group; requires a central core of homology in the junction. The consensus cleavage sequence is 5'-(A/T)TT(C/G)-3'. Cleavage occurs on the 3'-side of the TT dinucleotide at the point of strand exchange. HJ branch migration catalyzed by RuvA-RuvB allows RuvC to scan DNA until it finds its consensus sequence, where it cleaves and resolves the cruciform DNA. The sequence is that of Crossover junction endodeoxyribonuclease RuvC from Carboxydothermus hydrogenoformans (strain ATCC BAA-161 / DSM 6008 / Z-2901).